The sequence spans 360 residues: Homoserine O-succinyltransferase (360 aa).

Catalysis depends on C146, which acts as the Acyl-thioester intermediate. The substrate site is built by K167 and S196. The active-site Proton acceptor is the H239. E241 is an active-site residue. Residue R253 participates in substrate binding.

The protein belongs to the MetA family.

The protein localises to the cytoplasm. The enzyme catalyses L-homoserine + succinyl-CoA = O-succinyl-L-homoserine + CoA. It participates in amino-acid biosynthesis; L-methionine biosynthesis via de novo pathway; O-succinyl-L-homoserine from L-homoserine: step 1/1. In terms of biological role, transfers a succinyl group from succinyl-CoA to L-homoserine, forming succinyl-L-homoserine. In vitro, can also use glutaryl-CoA as acyl donor. This chain is Homoserine O-succinyltransferase, found in Thiothrix nivea (strain ATCC 35100 / DSM 5205 / JP2).